We begin with the raw amino-acid sequence, 77 residues long: DNA-directed RNA polymerase subunit epsilon (77 aa).

The protein belongs to the RNA polymerase subunit epsilon family. In terms of assembly, RNAP is composed of a core of 2 alpha, a beta and a beta' subunit. The core is associated with a delta subunit, and at least one of epsilon or omega. When a sigma factor is associated with the core the holoenzyme is formed, which can initiate transcription.

The enzyme catalyses RNA(n) + a ribonucleoside 5'-triphosphate = RNA(n+1) + diphosphate. In terms of biological role, a non-essential component of RNA polymerase (RNAP). In Lactobacillus delbrueckii subsp. bulgaricus (strain ATCC 11842 / DSM 20081 / BCRC 10696 / JCM 1002 / NBRC 13953 / NCIMB 11778 / NCTC 12712 / WDCM 00102 / Lb 14), this protein is DNA-directed RNA polymerase subunit epsilon.